A 1165-amino-acid polypeptide reads, in one-letter code: DNA-directed RNA polymerase subunit beta (1165 aa).

Belongs to the RNA polymerase beta chain family. The RNAP catalytic core consists of 2 alpha, 1 beta, 1 beta' and 1 omega subunit. When a sigma factor is associated with the core the holoenzyme is formed, which can initiate transcription.

It carries out the reaction RNA(n) + a ribonucleoside 5'-triphosphate = RNA(n+1) + diphosphate. In terms of biological role, DNA-dependent RNA polymerase catalyzes the transcription of DNA into RNA using the four ribonucleoside triphosphates as substrates. This Corynebacterium glutamicum (strain ATCC 13032 / DSM 20300 / JCM 1318 / BCRC 11384 / CCUG 27702 / LMG 3730 / NBRC 12168 / NCIMB 10025 / NRRL B-2784 / 534) protein is DNA-directed RNA polymerase subunit beta.